The primary structure comprises 227 residues: ATP synthase subunit a (227 aa).

Helical transmembrane passes span 14 to 34, 69 to 89, 98 to 118, 137 to 157, 169 to 189, and 205 to 223; these read LLNI…FVSF, WVVL…IGLF, QLSM…VYGF, LLVP…PLAL, HLLM…SVML, and IAVA…TLYL.

The protein belongs to the ATPase A chain family. F-type ATPases have 2 components, CF(1) - the catalytic core - and CF(0) - the membrane proton channel. CF(1) has five subunits: alpha(3), beta(3), gamma(1), delta(1), epsilon(1). CF(0) has three main subunits: a, b and c.

It is found in the mitochondrion inner membrane. Mitochondrial membrane ATP synthase (F(1)F(0) ATP synthase or Complex V) produces ATP from ADP in the presence of a proton gradient across the membrane which is generated by electron transport complexes of the respiratory chain. F-type ATPases consist of two structural domains, F(1) - containing the extramembraneous catalytic core and F(0) - containing the membrane proton channel, linked together by a central stalk and a peripheral stalk. During catalysis, ATP synthesis in the catalytic domain of F(1) is coupled via a rotary mechanism of the central stalk subunits to proton translocation. Key component of the proton channel; it may play a direct role in the translocation of protons across the membrane. The polypeptide is ATP synthase subunit a (ATP6) (Branchiostoma floridae (Florida lancelet)).